The following is a 98-amino-acid chain: MPSISTNIILAFTAALTGMLVFRSHLMSSLLCLEGMMLSMFILSTLTIMNLHSTMSFMMPILLLVFAACEAAIGLALLVMMSNTYGLDLIQNLSLLQC.

3 consecutive transmembrane segments (helical) span residues 2–22, 29–49, and 61–81; these read PSISTNIILAFTAALTGMLVF, SLLCLEGMMLSMFILSTLTIM, and ILLLVFAACEAAIGLALLVMM.

This sequence belongs to the complex I subunit 4L family. As to quaternary structure, core subunit of respiratory chain NADH dehydrogenase (Complex I) which is composed of 45 different subunits.

It is found in the mitochondrion inner membrane. The catalysed reaction is a ubiquinone + NADH + 5 H(+)(in) = a ubiquinol + NAD(+) + 4 H(+)(out). Functionally, core subunit of the mitochondrial membrane respiratory chain NADH dehydrogenase (Complex I) which catalyzes electron transfer from NADH through the respiratory chain, using ubiquinone as an electron acceptor. Part of the enzyme membrane arm which is embedded in the lipid bilayer and involved in proton translocation. The polypeptide is NADH-ubiquinone oxidoreductase chain 4L (MT-ND4L) (Lepilemur seali (Seal's sportive lemur)).